The following is a 1167-amino-acid chain: Pesticidal crystal protein Cry21Aa (1167 aa).

Belongs to the delta endotoxin family.

In terms of biological role, endotoxin with nematicidal activity. This chain is Pesticidal crystal protein Cry21Aa (cry21Aa), found in Bacillus thuringiensis.